Reading from the N-terminus, the 315-residue chain is Hydroxysteroid 11-beta-dehydrogenase 1-like protein (315 aa).

An N-terminal signal peptide occupies residues 1–15 (MKVLLLTGLGALFFA). NADP(+) contacts are provided by residues 36–62 (GANA…TAHT), 87–88 (DM), and 114–116 (NHI). A substrate-binding site is contributed by serine 165. The active-site Proton acceptor is tyrosine 178. Residues 178–182 (YSAAK) and 211–217 (GLRDRAS) each bind NADP(+). Positions 221–286 (AVRSSTSRPR…SKTEKNDGHL (66 aa)) are disordered. Over residues 277–286 (SKTEKNDGHL) the composition is skewed to basic and acidic residues.

The protein belongs to the short-chain dehydrogenases/reductases (SDR) family. In terms of tissue distribution, highly expressed in the brain.

It localises to the secreted. It catalyses the reaction cortisone + NADPH + H(+) = cortisol + NADP(+). In terms of biological role, unidirectional NADP(+)-dependent cortisol dehydrogenase (in vitro). This is Hydroxysteroid 11-beta-dehydrogenase 1-like protein (HSD11B1L) from Homo sapiens (Human).